A 346-amino-acid chain; its full sequence is Nitrilase 3 (346 aa).

At Ser2 the chain carries N-acetylserine. A CN hydrolase domain is found at 25 to 297; it reads VRVTIVQSST…EGLVTADLDL (273 aa). Glu65 functions as the Proton acceptor in the catalytic mechanism. Catalysis depends on Lys152, which acts as the Proton donor. Catalysis depends on Cys186, which acts as the Nucleophile.

It belongs to the carbon-nitrogen hydrolase superfamily. Nitrilase family.

It localises to the cell membrane. The catalysed reaction is a nitrile + 2 H2O = a carboxylate + NH4(+). Can convert indole-3-acetonitrile to the plant hormone indole-3-acetic acid. The chain is Nitrilase 3 (NIT3) from Arabidopsis thaliana (Mouse-ear cress).